Consider the following 69-residue polypeptide: UPF0346 protein llmg_2280 (69 aa).

Belongs to the UPF0346 family.

In Lactococcus lactis subsp. cremoris (strain MG1363), this protein is UPF0346 protein llmg_2280.